The sequence spans 535 residues: WD repeat-containing protein 25 (535 aa).

Disordered regions lie at residues 1-108 (MASL…PRPS) and 141-160 (DQST…RKRG). Over residues 141–155 (DQSTFESTAGNASSS) the composition is skewed to polar residues. 7 WD repeats span residues 235–277 (GHRG…HCLQ), 281–320 (VHSE…QVFS), 321–362 (GQSD…VVKG), 365–411 (ATIQ…KISN), 415–454 (HERY…RMSR), 460–501 (GHKV…RACT), and 504–535 (GHTQ…KIWH).

This is WD repeat-containing protein 25 (Wdr25) from Mus musculus (Mouse).